Here is an 855-residue protein sequence, read N- to C-terminus: DNA mismatch repair protein MutS (855 aa).

Gly616–Ser623 provides a ligand contact to ATP.

This sequence belongs to the DNA mismatch repair MutS family.

Its function is as follows. This protein is involved in the repair of mismatches in DNA. It is possible that it carries out the mismatch recognition step. This protein has a weak ATPase activity. This chain is DNA mismatch repair protein MutS, found in Salmonella paratyphi C (strain RKS4594).